The chain runs to 315 residues: Cobalamin biosynthesis protein CobD (315 aa).

A run of 7 helical transmembrane segments spans residues 1–21 (MLDIIIAVIIDWIIGDPYWFP), 50–70 (VFGGFIVIIVSSISFLIPFII), 79–99 (VIYHVINIFFLWTVLAAKSLH), 151–171 (DGIIAPLLFAMLGGAPLAMMY), 209–229 (VTGIIMCLVSPIIGGNIFYSI), 250–270 (AAAAASGIMLGGTNIYFGEVV), and 291–311 (IILMYSSEILFIIIYVIIICF).

This sequence belongs to the CobD/CbiB family.

Its subcellular location is the cell membrane. Its pathway is cofactor biosynthesis; adenosylcobalamin biosynthesis. Functionally, converts cobyric acid to cobinamide by the addition of aminopropanol on the F carboxylic group. This Clostridium acetobutylicum (strain ATCC 824 / DSM 792 / JCM 1419 / IAM 19013 / LMG 5710 / NBRC 13948 / NRRL B-527 / VKM B-1787 / 2291 / W) protein is Cobalamin biosynthesis protein CobD.